Consider the following 486-residue polypeptide: Ribosome biogenesis protein YTM1 (486 aa).

A ubiquitin-like (UBL) domain region spans residues 12-99; sequence RQLPINLFTR…ESQIDVEYVR (88 aa). WD repeat units lie at residues 212-251, 305-345, 349-388, 392-432, and 454-486; these read GHTGPISSVIASSSGKEIVTGSWDGNINLYVLPDAEPTEH, GHTG…AGAL, PFDKSALCVDQWKMNGTLATGNMDRTICLWDTRQATSLIS, PTTS…TALF, and VLGERLLAVDWNGEVLVAGGEDGEVGIWRARGE. Residues 249 to 299 are disordered; sequence TEHQVPADPVSYLPGQGTKKRRKLEKDQEKAPIEGLTDGDATGEGGWRRAP.

Belongs to the WD repeat WDR12/YTM1 family. Component of the NOP7 complex, composed of ERB1, NOP7 and YTM1. The complex is held together by ERB1, which interacts with NOP7 via its N-terminal domain and with YTM1 via a high-affinity interaction between the seven-bladed beta-propeller domains of the 2 proteins. The NOP7 complex associates with the 66S pre-ribosome. Interacts (via UBL domain) with MDN1 (via VWFA/MIDAS domain).

It localises to the nucleus. It is found in the nucleolus. Its subcellular location is the nucleoplasm. Component of the NOP7 complex, which is required for maturation of the 25S and 5.8S ribosomal RNAs and formation of the 60S ribosome. The polypeptide is Ribosome biogenesis protein YTM1 (Cryptococcus neoformans var. neoformans serotype D (strain B-3501A) (Filobasidiella neoformans)).